Reading from the N-terminus, the 106-residue chain is Iron-sulfur cluster assembly protein CyaY (106 aa).

The protein belongs to the frataxin family.

Its function is as follows. Involved in iron-sulfur (Fe-S) cluster assembly. May act as a regulator of Fe-S biogenesis. The sequence is that of Iron-sulfur cluster assembly protein CyaY from Pectobacterium carotovorum subsp. carotovorum (strain PC1).